The sequence spans 159 residues: 2-C-methyl-D-erythritol 2,4-cyclodiphosphate synthase (159 aa).

Residues aspartate 10 and histidine 12 each contribute to the a divalent metal cation site. 4-CDP-2-C-methyl-D-erythritol 2-phosphate contacts are provided by residues 10–12 and 36–37; these read DVH and HS. Position 44 (histidine 44) interacts with a divalent metal cation. Residues 58 to 60, 63 to 67, 102 to 108, 134 to 137, phenylalanine 141, and arginine 144 contribute to the 4-CDP-2-C-methyl-D-erythritol 2-phosphate site; these read DIG, FPDTD, AQAPKMA, and TTTE.

This sequence belongs to the IspF family. Homotrimer. The cofactor is a divalent metal cation.

It catalyses the reaction 4-CDP-2-C-methyl-D-erythritol 2-phosphate = 2-C-methyl-D-erythritol 2,4-cyclic diphosphate + CMP. The protein operates within isoprenoid biosynthesis; isopentenyl diphosphate biosynthesis via DXP pathway; isopentenyl diphosphate from 1-deoxy-D-xylulose 5-phosphate: step 4/6. Functionally, involved in the biosynthesis of isopentenyl diphosphate (IPP) and dimethylallyl diphosphate (DMAPP), two major building blocks of isoprenoid compounds. Catalyzes the conversion of 4-diphosphocytidyl-2-C-methyl-D-erythritol 2-phosphate (CDP-ME2P) to 2-C-methyl-D-erythritol 2,4-cyclodiphosphate (ME-CPP) with a corresponding release of cytidine 5-monophosphate (CMP). The chain is 2-C-methyl-D-erythritol 2,4-cyclodiphosphate synthase from Shewanella piezotolerans (strain WP3 / JCM 13877).